A 149-amino-acid chain; its full sequence is Large ribosomal subunit protein bL20m (149 aa).

The N-terminal 9 residues, 1 to 9, are a transit peptide targeting the mitochondrion; it reads MVFLSAPLW.

This sequence belongs to the bacterial ribosomal protein bL20 family. In terms of assembly, component of the mitochondrial ribosome large subunit (39S) which comprises a 16S rRNA and about 50 distinct proteins. Interacts with OXA1L.

The protein resides in the mitochondrion. The sequence is that of Large ribosomal subunit protein bL20m (MRPL20) from Bos taurus (Bovine).